The sequence spans 429 residues: 3-phosphoshikimate 1-carboxyvinyltransferase (429 aa).

3 residues coordinate 3-phosphoshikimate: lysine 23, serine 24, and arginine 28. Lysine 23 contacts phosphoenolpyruvate. The phosphoenolpyruvate site is built by glycine 95 and arginine 123. Residues serine 168, glutamine 170, aspartate 316, and lysine 343 each contribute to the 3-phosphoshikimate site. Glutamine 170 serves as a coordination point for phosphoenolpyruvate. Residue aspartate 316 is the Proton acceptor of the active site. 2 residues coordinate phosphoenolpyruvate: arginine 347 and arginine 389.

It belongs to the EPSP synthase family. As to quaternary structure, monomer.

The protein localises to the cytoplasm. The enzyme catalyses 3-phosphoshikimate + phosphoenolpyruvate = 5-O-(1-carboxyvinyl)-3-phosphoshikimate + phosphate. It participates in metabolic intermediate biosynthesis; chorismate biosynthesis; chorismate from D-erythrose 4-phosphate and phosphoenolpyruvate: step 6/7. Catalyzes the transfer of the enolpyruvyl moiety of phosphoenolpyruvate (PEP) to the 5-hydroxyl of shikimate-3-phosphate (S3P) to produce enolpyruvyl shikimate-3-phosphate and inorganic phosphate. This Bacillus thuringiensis (strain Al Hakam) protein is 3-phosphoshikimate 1-carboxyvinyltransferase.